The primary structure comprises 286 residues: NH(3)-dependent NAD(+) synthetase (286 aa).

51-58 (GISGGVDS) lines the ATP pocket. A Mg(2+)-binding site is contributed by aspartate 57. Arginine 148 is a deamido-NAD(+) binding site. Position 168 (threonine 168) interacts with ATP. Residue glutamate 173 participates in Mg(2+) binding. The deamido-NAD(+) site is built by lysine 181 and aspartate 188. ATP-binding residues include lysine 197 and threonine 219. 268–269 (HK) lines the deamido-NAD(+) pocket.

The protein belongs to the NAD synthetase family. As to quaternary structure, homodimer.

It carries out the reaction deamido-NAD(+) + NH4(+) + ATP = AMP + diphosphate + NAD(+) + H(+). Its pathway is cofactor biosynthesis; NAD(+) biosynthesis; NAD(+) from deamido-NAD(+) (ammonia route): step 1/1. Its function is as follows. Catalyzes the ATP-dependent amidation of deamido-NAD to form NAD. Uses ammonia as a nitrogen source. This chain is NH(3)-dependent NAD(+) synthetase, found in Paraburkholderia phytofirmans (strain DSM 17436 / LMG 22146 / PsJN) (Burkholderia phytofirmans).